We begin with the raw amino-acid sequence, 239 residues long: Flagellin B3 (239 aa).

Positions 1 to 11 (MLKNFMKNKKG) are excised as a propeptide. N-linked (GlcNAc...) asparagine glycosylation is found at N115 and N128.

The protein belongs to the archaeal flagellin family. In terms of processing, N-linked glycans consist of the 779 Da trisaccharide beta-ManNAc(Thr)-(1-4)-beta-GlcNAc3NAcA-(1-3)-beta-GlcNAc.

It localises to the archaeal flagellum. Flagellin is the subunit protein which polymerizes to form the filaments of archaeal flagella. This is Flagellin B3 (flaB3) from Methanococcus voltae.